Here is a 141-residue protein sequence, read N- to C-terminus: MATIKVDVVSAEEQIFSGEAKFVALPGETGELGILPGHTPLITRIRPGAVRIEVEGGSDEFVFVAGGILEVQPGAVTVLADTAIRGKDLDAAKAEEARKRAEETLQNAKSDLDLAKAQSELATAMAQLEAIQRLAKIRSRH.

It belongs to the ATPase epsilon chain family. As to quaternary structure, F-type ATPases have 2 components, CF(1) - the catalytic core - and CF(0) - the membrane proton channel. CF(1) has five subunits: alpha(3), beta(3), gamma(1), delta(1), epsilon(1). CF(0) has three main subunits: a, b and c.

It is found in the cell inner membrane. In terms of biological role, produces ATP from ADP in the presence of a proton gradient across the membrane. The protein is ATP synthase epsilon chain of Burkholderia multivorans (strain ATCC 17616 / 249).